The chain runs to 122 residues: Large ribosomal subunit protein uL14 (122 aa).

This sequence belongs to the universal ribosomal protein uL14 family. As to quaternary structure, part of the 50S ribosomal subunit. Forms a cluster with proteins L3 and L19. In the 70S ribosome, L14 and L19 interact and together make contacts with the 16S rRNA in bridges B5 and B8.

Its function is as follows. Binds to 23S rRNA. Forms part of two intersubunit bridges in the 70S ribosome. This Natranaerobius thermophilus (strain ATCC BAA-1301 / DSM 18059 / JW/NM-WN-LF) protein is Large ribosomal subunit protein uL14.